Reading from the N-terminus, the 366-residue chain is N-acetyl-6-hydroxytryptophan oxidase ivoB (366 aa).

A signal peptide spans 1–18; it reads MHLLSSLAALAAAITVAF. N-linked (GlcNAc...) asparagine glycans are attached at residues asparagine 28 and asparagine 81. Cu cation-binding residues include histidine 87 and histidine 96. 2 N-linked (GlcNAc...) asparagine glycosylation sites follow: asparagine 114 and asparagine 121. Histidine 291 serves as a coordination point for Cu cation. Asparagine 319 carries an N-linked (GlcNAc...) asparagine glycan.

The protein belongs to the tyrosinase family. The cofactor is Cu(2+).

It functions in the pathway pigment biosynthesis. Its activity is regulated as follows. Activity is inhibited by 2,3-dihydroxynaphthalene, phenylhydrazine, diethyl dithiocarbamate and 8-hydroxyquinolene. Functionally, nonribosomal peptide synthetase; part of the pathway that mediates the biosynthesis of the gray-brown conidiophore pigment. The first step of the pathway is performed by the nonribosomal peptide synthetase ivoA that catalyzes ATP-dependent unidirectional stereoinversion of L-tryptophan to D-tryptophan with complete conversion. While the stereoinversion is catalyzed by the epimerization (E) domain of ivoA, the terminal condensation (C) domain stereoselectively hydrolyzes D-tryptophanyl-S-phosphopantetheine thioester and thus represents a non-canonical C domain function. D-tryptophan is acetylated, probably by an endogenous acetyltransferase. N-acetyltryptophan is further 6-hydroxylated into N-acetyl-6-hydroxytryptophan (AHT) by the cytochrome P450 monooxygenase ivoC. N-acetyl-6-hydroxytryptophan is substrate of the N-acetyl-6-hydroxytryptophan oxidase ivoB to produce the gray-brown conidiophore pigment. This is N-acetyl-6-hydroxytryptophan oxidase ivoB from Emericella nidulans (strain FGSC A4 / ATCC 38163 / CBS 112.46 / NRRL 194 / M139) (Aspergillus nidulans).